Reading from the N-terminus, the 412-residue chain is Divalent metal cation transporter MntH (412 aa).

Helical transmembrane passes span 19–39, 46–66, 94–114, 122–142, 156–176, 196–216, 241–261, 290–310, 329–349, 350–370, and 389–409; these read LALM…GNFA, ASFG…AMLI, VWFY…AEFI, LILG…TFLI, VIGG…IFSQ, AVFL…IYLH, IAMT…AAAF, VFGL…TLAG, TITM…TRIL, VMSQ…LLIF, and IGWM…VGTA.

Belongs to the NRAMP family.

It localises to the cell inner membrane. In terms of biological role, h(+)-stimulated, divalent metal cation uptake system. The sequence is that of Divalent metal cation transporter MntH from Citrobacter koseri (strain ATCC BAA-895 / CDC 4225-83 / SGSC4696).